The chain runs to 84 residues: Translational regulator CsrA (84 aa).

The protein belongs to the CsrA/RsmA family. In terms of assembly, homodimer; the beta-strands of each monomer intercalate to form a hydrophobic core, while the alpha-helices form wings that extend away from the core.

It is found in the cytoplasm. Functionally, a translational regulator that binds mRNA to regulate translation initiation and/or mRNA stability. Usually binds in the 5'-UTR at or near the Shine-Dalgarno sequence preventing ribosome-binding, thus repressing translation. Its main target seems to be the major flagellin gene, while its function is anatagonized by FliW. This Leptospira interrogans serogroup Icterohaemorrhagiae serovar Lai (strain 56601) protein is Translational regulator CsrA.